Here is a 98-residue protein sequence, read N- to C-terminus: Small ribosomal subunit protein bS20 (98 aa).

It belongs to the bacterial ribosomal protein bS20 family.

Functionally, binds directly to 16S ribosomal RNA. The protein is Small ribosomal subunit protein bS20 of Prochlorococcus marinus (strain NATL1A).